The primary structure comprises 197 residues: MLERIKDSFTESIQTKIDASEALPESIAKAAEMMVHCLLSGNKILACGNGGSAGDAQHFSAELLNRYEIERPPLPAIALSCDTSTITAIANDYSYDEIFSKQIMALGQPGDILLAISTSGNSGNVIKAMEAALSRDMTIVSLTGKDGGAMAGLLSVNDVEIRVPSNVTARIQEVHLLAIHCLCDNIDHTLFPQDEQA.

The SIS domain occupies 34–196; it reads MVHCLLSGNK…DHTLFPQDEQ (163 aa). 49-51 provides a ligand contact to substrate; it reads NGG. H58 and E62 together coordinate Zn(2+). Substrate contacts are provided by residues E62, 91–92, 117–119, S122, and Q172; these read ND and STS. Residues Q172 and H180 each coordinate Zn(2+).

Belongs to the SIS family. GmhA subfamily. In terms of assembly, homotetramer. Requires Zn(2+) as cofactor.

Its subcellular location is the cytoplasm. It carries out the reaction 2 D-sedoheptulose 7-phosphate = D-glycero-alpha-D-manno-heptose 7-phosphate + D-glycero-beta-D-manno-heptose 7-phosphate. It functions in the pathway carbohydrate biosynthesis; D-glycero-D-manno-heptose 7-phosphate biosynthesis; D-glycero-alpha-D-manno-heptose 7-phosphate and D-glycero-beta-D-manno-heptose 7-phosphate from sedoheptulose 7-phosphate: step 1/1. Functionally, catalyzes the isomerization of sedoheptulose 7-phosphate in D-glycero-D-manno-heptose 7-phosphate. The sequence is that of Phosphoheptose isomerase from Shewanella halifaxensis (strain HAW-EB4).